The chain runs to 437 residues: Nickel-cobalt-cadmium resistance protein NccC (437 aa).

Residues 1 to 48 (MGAVLKAEANIFRSHPFRPMNQATPKKLRSAPCIGVALLLMATGSIQA) form the signal peptide.

This sequence belongs to the outer membrane factor (OMF) (TC 1.B.17) family.

Component of the NCC cation-efflux system that confers resistance to nickel, cobalt and cadmium. The sequence is that of Nickel-cobalt-cadmium resistance protein NccC (nccC) from Alcaligenes xylosoxydans xylosoxydans (Achromobacter xylosoxidans).